Consider the following 149-residue polypeptide: Arginine repressor (149 aa).

This sequence belongs to the ArgR family.

The protein localises to the cytoplasm. It functions in the pathway amino-acid biosynthesis; L-arginine biosynthesis [regulation]. In terms of biological role, regulates arginine biosynthesis genes. This is Arginine repressor from Oceanobacillus iheyensis (strain DSM 14371 / CIP 107618 / JCM 11309 / KCTC 3954 / HTE831).